The following is a 281-amino-acid chain: NADPH-dependent 7-cyano-7-deazaguanine reductase (281 aa).

Position 88 to 90 (88 to 90 (VES)) interacts with substrate. Position 90 to 91 (90 to 91 (SK)) interacts with NADPH. The Thioimide intermediate role is filled by Cys189. Catalysis depends on Asp196, which acts as the Proton donor. 228–229 (HE) serves as a coordination point for substrate. 257-258 (RG) lines the NADPH pocket.

Belongs to the GTP cyclohydrolase I family. QueF type 2 subfamily. As to quaternary structure, homodimer.

The protein localises to the cytoplasm. It catalyses the reaction 7-aminomethyl-7-carbaguanine + 2 NADP(+) = 7-cyano-7-deazaguanine + 2 NADPH + 3 H(+). It participates in tRNA modification; tRNA-queuosine biosynthesis. In terms of biological role, catalyzes the NADPH-dependent reduction of 7-cyano-7-deazaguanine (preQ0) to 7-aminomethyl-7-deazaguanine (preQ1). The chain is NADPH-dependent 7-cyano-7-deazaguanine reductase from Cronobacter sakazakii (strain ATCC BAA-894) (Enterobacter sakazakii).